The following is a 511-amino-acid chain: Cobyric acid synthase (511 aa).

One can recognise a GATase cobBQ-type domain in the interval L251–F443. The Nucleophile role is filled by C332. The active site involves H435.

This sequence belongs to the CobB/CobQ family. CobQ subfamily.

The protein operates within cofactor biosynthesis; adenosylcobalamin biosynthesis. Functionally, catalyzes amidations at positions B, D, E, and G on adenosylcobyrinic A,C-diamide. NH(2) groups are provided by glutamine, and one molecule of ATP is hydrogenolyzed for each amidation. The sequence is that of Cobyric acid synthase from Listeria innocua serovar 6a (strain ATCC BAA-680 / CLIP 11262).